Here is a 304-residue protein sequence, read N- to C-terminus: Lipid droplet-associated triacylglycerol lipase (304 aa).

Over 1-155 (MTVKEYTKSK…MGIKMTAALR (155 aa)) the chain is Lumenal. Residue Asn-95 is glycosylated (N-linked (GlcNAc...) asparagine). Residues 107–111 (GHSVG) carry the GXSXG motif. The active-site Nucleophile is the Ser-109. An intramembrane segment occupies 156-176 (YIPPLAHVVSLFSYIFFYWIL). The Lumenal segment spans residues 177–304 (SEGFSRFIID…HAEYAINAFF (128 aa)).

This sequence belongs to the AB hydrolase superfamily. LDAH family.

The protein localises to the lipid droplet. It is found in the membrane. It catalyses the reaction a triacylglycerol + H2O = a diacylglycerol + a fatty acid + H(+). Functionally, shows both triacylglycerol (TAG) lipase and ester hydrolase activities. May play a role in TAG homeostasis. The polypeptide is Lipid droplet-associated triacylglycerol lipase (Saccharomyces cerevisiae (strain ATCC 204508 / S288c) (Baker's yeast)).